The primary structure comprises 794 residues: MRGPRRFRLWTRANVLTVISILTSILSGAGCSPLSQLPSDNPAHVGVQDGVTTERVDRSKNHRNTTASSGAHRVTSGEPLGDRVTTRSTTAPDQVPGDASRNTTMAGTKCSLQVDLSTFACPADCQCNATSEGMVVSCVTPDTLREFPVIAREVARAVIKLELRGQSKLTSLKTELKFFTCLKHLTIENCGLNNIQGIAFKTLTSLETINLRHNHLTEFPQELLRTLNLRELWLEGNALTCSCTNLWLRSVDVAADRSEMTCSTRDGVSKMKMTQFKCEPCGIPDIRNMTLVFEPKNGMFLLRFVISGCPKPKIDLLRNHHHVLRSGSSQFKLTDFKSEFNGQVVTGTITILPHMETSQTTYVLTAVNSKGQANQTFHLYDQTTPASSIHIPLSNIPPRISSATTPRASPTEDFGPQTQVILPVVGVVILLISAVFIIYLCQRAKHRSHARQRCKKALLDKKFNEFQEGVPLTGLQLVDNPNYNLTKKKHVATTCPKTVRLQTILLMRVIGEGAFGRVFLGTCAHLIQKNEFAIVAVKTLKGSCSDSLKRDFEREAEMLATIEHANIVTFYGVCTESDQWMMIFEFMENGDLNKYLRMHGPDAAFLKDRDSMDSDEGQLTREQLMKIVLQIASAMEYLALQHFVHRDLATRNCLVGCDLVVKLGDFGMSRDVYTTDYYRVEGTAMLPVRWMPPESIIYRTFTTESDVWSFGVTLWEVFTYGKQPWFEYSNSEVIEHIKNSRTLKRPPRTCTDGVYRVMQGCWKPNPQDRLTMKDIAELLREEVSGDPVYIDIIA.

The signal sequence occupies residues 1-33 (MRGPRRFRLWTRANVLTVISILTSILSGAGCSP). Topologically, residues 34–419 (LSQLPSDNPA…PTEDFGPQTQ (386 aa)) are extracellular. Residues 36–102 (QLPSDNPAHV…DQVPGDASRN (67 aa)) are disordered. 3 N-linked (GlcNAc...) asparagine glycosylation sites follow: Asn64, Asn102, and Asn128. LRR repeat units follow at residues 181–202 (CLKHLTIENCGLNNIQGIAFKT) and 205–226 (SLETINLRHNHLTEFPQELLRT). In terms of domain architecture, LRRCT spans 237–280 (NALTCSCTNLWLRSVDVAADRSEMTCSTRDGVSKMKMTQFKCEP). N-linked (GlcNAc...) asparagine glycans are attached at residues Asn288 and Asn374. Residues 420-440 (VILPVVGVVILLISAVFIIYL) traverse the membrane as a helical segment. The Cytoplasmic segment spans residues 441–794 (CQRAKHRSHA…GDPVYIDIIA (354 aa)). The 272-residue stretch at 504–775 (ILLMRVIGEG…PQDRLTMKDI (272 aa)) folds into the Protein kinase domain. Residues 510-518 (IGEGAFGRV) and Lys538 contribute to the ATP site. Asp647 (proton acceptor) is an active-site residue. Phosphotyrosine; by autocatalysis occurs at positions 673, 677, 678, and 789.

It belongs to the protein kinase superfamily. Tyr protein kinase family. Insulin receptor subfamily. Expression is confined to the central nervous system and its associated endocrine tissues.

The protein resides in the membrane. The catalysed reaction is L-tyrosyl-[protein] + ATP = O-phospho-L-tyrosyl-[protein] + ADP + H(+). May bind an endogenous invertebrate neurotrophin. Binds human NT-3, but not NGF or BDNF. The sequence is that of Putative neurotrophin receptor LTRK 1 from Lymnaea stagnalis (Great pond snail).